Here is a 352-residue protein sequence, read N- to C-terminus: MTASNDKPSLSYRDAGVDIDAGNALVQRIKGAAQATRRPEVMAGLGGFGALFELPKGYQEPVLVSGTDGVGTKLRLAMQMNKHDTIGIDLVAMCVNDLIVQGAEPLFFLDYYATGKLSVDVAATVVTGIGEGCSQAGCSLVGGETAEMPGMYEGDDYDLAGFCVGIVEKSKIIDGSLVKPGDVLIGLASSGVHSNGYSLVRKIVEVSGADLNQPFGDATLGEALLAPTRIYVKPLLELIRQTPVHALSHITGGGLLENLPRVLPAHAKAVVDVNAFEMPELFNWLQKNGNVAWNEMFRTFNCGIGMVVCVPADSADKALELLSAAGETVFRIGSIETHTEEEPVVELKGLVD.

Belongs to the AIR synthase family.

Its subcellular location is the cytoplasm. It carries out the reaction 2-formamido-N(1)-(5-O-phospho-beta-D-ribosyl)acetamidine + ATP = 5-amino-1-(5-phospho-beta-D-ribosyl)imidazole + ADP + phosphate + H(+). It functions in the pathway purine metabolism; IMP biosynthesis via de novo pathway; 5-amino-1-(5-phospho-D-ribosyl)imidazole from N(2)-formyl-N(1)-(5-phospho-D-ribosyl)glycinamide: step 2/2. The protein is Phosphoribosylformylglycinamidine cyclo-ligase of Hahella chejuensis (strain KCTC 2396).